The primary structure comprises 543 residues: Cysteine/serine-rich nuclear protein 2 (543 aa).

Position 1 is an N-acetylmethionine (methionine 1). 3 disordered regions span residues 1-51 (MDAF…SFTP), 281-305 (KRQV…LTGA), and 488-543 (DCNP…PLAV). Over residues 31-40 (SSDSADSCDS) the composition is skewed to low complexity. 2 stretches are compositionally biased toward polar residues: residues 42–51 (NPPTTASFTP) and 296–305 (PTASCSLTGA).

The protein belongs to the AXUD1 family.

The protein resides in the nucleus. Functionally, binds to the consensus sequence 5'-AGAGTG-3' and has transcriptional activator activity. May play a role in apoptosis. This chain is Cysteine/serine-rich nuclear protein 2 (CSRNP2), found in Homo sapiens (Human).